We begin with the raw amino-acid sequence, 457 residues long: Probable mitochondrial-processing peptidase subunit beta (457 aa).

His-66 serves as a coordination point for Zn(2+). The active-site Proton acceptor is Glu-69. The Zn(2+) site is built by His-70 and Glu-146.

The protein belongs to the peptidase M16 family. As to quaternary structure, heterodimer of mas2 (alpha) and qcr1 (beta) subunits, forming the mitochondrial processing protease (MPP) in which mas2 is involved in substrate recognition and binding and qcr1 is the catalytic subunit. The cofactor is Zn(2+).

Its subcellular location is the mitochondrion matrix. It carries out the reaction Release of N-terminal transit peptides from precursor proteins imported into the mitochondrion, typically with Arg in position P2.. With respect to regulation, binding to mas2 is required for catalytic activity. Its function is as follows. Catalytic subunit of the essential mitochondrial processing protease (MPP), which cleaves the mitochondrial sequence off newly imported precursors proteins. Preferentially, cleaves after an arginine at position P2. The protein is Probable mitochondrial-processing peptidase subunit beta (qcr1) of Schizosaccharomyces pombe (strain 972 / ATCC 24843) (Fission yeast).